The primary structure comprises 222 residues: Uclacyanin-3 (222 aa).

The first 21 residues, 1–21 (MGSTVAAALLLFLAAVPAVFA), serve as a signal peptide directing secretion. Residues 22–120 (ATFKVGDISG…GMKLAVPVLA (99 aa)) enclose the Phytocyanin domain. His-61, Cys-102, His-107, and Met-112 together coordinate Cu cation. Cys-74 and Cys-108 are joined by a disulfide. The tract at residues 121 to 198 (AAPSPSTPSS…APLPPSLSPN (78 aa)) is disordered. Pro residues-rich tracts occupy residues 125 to 172 (PSTP…PSAS) and 185 to 195 (TPPPAPLPPSL). Residue Asn-198 is the site of GPI-anchor amidated asparagine attachment. The propeptide at 199-222 (AASKGVMSYGIIGVTMILMYAVMT) is removed in mature form.

Its subcellular location is the cell membrane. Probably acts as an electron carrier involved in oxygen activation and/or lignin formation. The sequence is that of Uclacyanin-3 (UCC3) from Arabidopsis thaliana (Mouse-ear cress).